The chain runs to 166 residues: Lipoprotein signal peptidase (166 aa).

The next 4 membrane-spanning stretches (helical) occupy residues 9–29 (AGGS…FDQL), 37–57 (VFAY…LVYN), 71–91 (WQRW…CYLL), and 100–120 (FCTA…DRLL). Active-site residues include Asp-126 and Asp-144. Residues 136–156 (HWPAFNLADSAITIGAALLVF) form a helical membrane-spanning segment.

Belongs to the peptidase A8 family.

The protein localises to the cell inner membrane. The enzyme catalyses Release of signal peptides from bacterial membrane prolipoproteins. Hydrolyzes -Xaa-Yaa-Zaa-|-(S,diacylglyceryl)Cys-, in which Xaa is hydrophobic (preferably Leu), and Yaa (Ala or Ser) and Zaa (Gly or Ala) have small, neutral side chains.. It functions in the pathway protein modification; lipoprotein biosynthesis (signal peptide cleavage). In terms of biological role, this protein specifically catalyzes the removal of signal peptides from prolipoproteins. In Paraburkholderia phymatum (strain DSM 17167 / CIP 108236 / LMG 21445 / STM815) (Burkholderia phymatum), this protein is Lipoprotein signal peptidase.